The chain runs to 321 residues: Lipoyl synthase (321 aa).

Positions 60, 65, 71, 86, 90, 93, and 299 each coordinate [4Fe-4S] cluster. Residues 72–288 (WEKKHATFMI…ETIGRTKGFL (217 aa)) enclose the Radical SAM core domain.

The protein belongs to the radical SAM superfamily. Lipoyl synthase family. [4Fe-4S] cluster serves as cofactor.

It localises to the cytoplasm. It catalyses the reaction [[Fe-S] cluster scaffold protein carrying a second [4Fe-4S](2+) cluster] + N(6)-octanoyl-L-lysyl-[protein] + 2 oxidized [2Fe-2S]-[ferredoxin] + 2 S-adenosyl-L-methionine + 4 H(+) = [[Fe-S] cluster scaffold protein] + N(6)-[(R)-dihydrolipoyl]-L-lysyl-[protein] + 4 Fe(3+) + 2 hydrogen sulfide + 2 5'-deoxyadenosine + 2 L-methionine + 2 reduced [2Fe-2S]-[ferredoxin]. It functions in the pathway protein modification; protein lipoylation via endogenous pathway; protein N(6)-(lipoyl)lysine from octanoyl-[acyl-carrier-protein]: step 2/2. Functionally, catalyzes the radical-mediated insertion of two sulfur atoms into the C-6 and C-8 positions of the octanoyl moiety bound to the lipoyl domains of lipoate-dependent enzymes, thereby converting the octanoylated domains into lipoylated derivatives. The polypeptide is Lipoyl synthase (Mesorhizobium japonicum (strain LMG 29417 / CECT 9101 / MAFF 303099) (Mesorhizobium loti (strain MAFF 303099))).